The chain runs to 502 residues: Maturase K (502 aa).

It belongs to the intron maturase 2 family. MatK subfamily.

It localises to the plastid. The protein resides in the chloroplast. Functionally, usually encoded in the trnK tRNA gene intron. Probably assists in splicing its own and other chloroplast group II introns. This is Maturase K from Theobroma cacao (Cacao).